The following is a 308-amino-acid chain: Aspartate carbamoyltransferase catalytic subunit (308 aa).

Carbamoyl phosphate contacts are provided by arginine 57 and threonine 58. L-aspartate is bound at residue lysine 86. Residues arginine 107, histidine 135, and glutamine 138 each coordinate carbamoyl phosphate. The L-aspartate site is built by arginine 168 and arginine 229. Residues leucine 268 and proline 269 each coordinate carbamoyl phosphate.

It belongs to the aspartate/ornithine carbamoyltransferase superfamily. ATCase family. Heterooligomer of catalytic and regulatory chains.

It carries out the reaction carbamoyl phosphate + L-aspartate = N-carbamoyl-L-aspartate + phosphate + H(+). It participates in pyrimidine metabolism; UMP biosynthesis via de novo pathway; (S)-dihydroorotate from bicarbonate: step 2/3. In terms of biological role, catalyzes the condensation of carbamoyl phosphate and aspartate to form carbamoyl aspartate and inorganic phosphate, the committed step in the de novo pyrimidine nucleotide biosynthesis pathway. The sequence is that of Aspartate carbamoyltransferase catalytic subunit from Pyrococcus abyssi (strain GE5 / Orsay).